A 521-amino-acid chain; its full sequence is GMP synthase [glutamine-hydrolyzing] (521 aa).

One can recognise a Glutamine amidotransferase type-1 domain in the interval 8–203 (KILILDFGAQ…VVDICGCQTL (196 aa)). The active-site Nucleophile is the Cys85. Residues His177 and Glu179 contribute to the active site. The 193-residue stretch at 204 to 396 (WTAANIIDDQ…LGLPRTMVYR (193 aa)) folds into the GMPS ATP-PPase domain. 231 to 237 (SGGVDSS) serves as a coordination point for ATP.

In terms of assembly, homodimer.

It catalyses the reaction XMP + L-glutamine + ATP + H2O = GMP + L-glutamate + AMP + diphosphate + 2 H(+). It functions in the pathway purine metabolism; GMP biosynthesis; GMP from XMP (L-Gln route): step 1/1. Its function is as follows. Catalyzes the synthesis of GMP from XMP. The sequence is that of GMP synthase [glutamine-hydrolyzing] from Xanthomonas oryzae pv. oryzae (strain MAFF 311018).